Here is a 74-residue protein sequence, read N- to C-terminus: Large ribosomal subunit protein bL31 (74 aa).

It belongs to the bacterial ribosomal protein bL31 family. Type A subfamily. In terms of assembly, part of the 50S ribosomal subunit.

Binds the 23S rRNA. The protein is Large ribosomal subunit protein bL31 of Phenylobacterium zucineum (strain HLK1).